Here is an 881-residue protein sequence, read N- to C-terminus: MERKSSSEIRRMYLDFFKSKGHIIEPSASLVPQDDPTLLWINSGVATMKKYFDGSVVPEVPRLTSSQKSIRTNDIENVGHTARHHTLFEMLGNFSVGDYFKEEAIHWAWELLTSKEWYGMDPEKLYVTVYPKDEEAKKIWLETPIDPSHIVKVEDNFWDIGEGPSGPDSEIFYDRGEAFNNLEDDDPENYPGGENERWLEIWNIVFSQFNHKPDGTYEPLPHKNIDTGMGLERVVSVFQDAPTNFETDLFLPIIHEVEKLSGKKYGENKESDISFKVIADHARAITFAIGDGAIPSNEGRGYVIRRLLRRAVMHGKQLGVNETFLYKMVPVVGEIMKDYYPEVLADQDYIAKVIKSEEDRFSETLTDGLELLNTIIDETKTKGSDTISGFDAFRLFDTYGFPLELAKEYASDKGLKVDEAGFEDEMQKQKERARSARSTEKSMGVQSDLLTDLKTESKYVGYDTLRVDNAILENVIQDGKLTDIVEPGEARVLFNITPFYAEMGGQVADQGEIRDANGEIVAEVIDVQHAPNGQNLHTIKALKKMHSGAAYTLEVNRAFHLKVEKNHTATHLLDQALRDILGDHTQQAGSLVEPGYLRFDFTHFGQVTNEDLDRVEKIINEKIYDEIPVTTVETDLETGKKMGAIALFNDKYGKKVRVVGIGDYSKEFCGGTHVKNTNEIGLFKIVSESGVGAGVRRIEAVTSQAALEFLNTEENLLKQTAGLLKSAQLKDVPTKTEQLQSNVKALTQKISQLEAKIAKSQAANIGDEMVEINGVRLIAADVQVSGMDQLRQMADDWKNKDQSDVLVLAAKIGEKANLIAAVKDDFVKKGLKAGDLIKAIAPKVNGGGGGRPNMAQAGGSNPDNIKAALQAAREWLESQNG.

A compositionally biased stretch (basic and acidic residues) spans Phe-422–Glu-440. Positions Phe-422–Val-445 are disordered. 4 residues coordinate Zn(2+): His-567, His-571, Cys-669, and His-673.

The protein belongs to the class-II aminoacyl-tRNA synthetase family. Requires Zn(2+) as cofactor.

It is found in the cytoplasm. It carries out the reaction tRNA(Ala) + L-alanine + ATP = L-alanyl-tRNA(Ala) + AMP + diphosphate. In terms of biological role, catalyzes the attachment of alanine to tRNA(Ala) in a two-step reaction: alanine is first activated by ATP to form Ala-AMP and then transferred to the acceptor end of tRNA(Ala). Also edits incorrectly charged Ser-tRNA(Ala) and Gly-tRNA(Ala) via its editing domain. In Pediococcus pentosaceus (strain ATCC 25745 / CCUG 21536 / LMG 10740 / 183-1w), this protein is Alanine--tRNA ligase.